Reading from the N-terminus, the 173-residue chain is ATP-dependent protease subunit HslV (173 aa).

Thr2 is an active-site residue. Residues Gly158, Asp161, and Thr164 each coordinate Na(+).

This sequence belongs to the peptidase T1B family. HslV subfamily. In terms of assembly, a double ring-shaped homohexamer of HslV is capped on each side by a ring-shaped HslU homohexamer. The assembly of the HslU/HslV complex is dependent on binding of ATP.

Its subcellular location is the cytoplasm. It carries out the reaction ATP-dependent cleavage of peptide bonds with broad specificity.. Its activity is regulated as follows. Allosterically activated by HslU binding. In terms of biological role, protease subunit of a proteasome-like degradation complex believed to be a general protein degrading machinery. This chain is ATP-dependent protease subunit HslV, found in Actinobacillus succinogenes (strain ATCC 55618 / DSM 22257 / CCUG 43843 / 130Z).